A 383-amino-acid chain; its full sequence is Putative 8-amino-7-oxononanoate synthase (383 aa).

Arg-22 is a substrate binding site. 109–110 (GY) is a pyridoxal 5'-phosphate binding site. His-134 lines the substrate pocket. Pyridoxal 5'-phosphate contacts are provided by residues Ser-182, 207–210 (DDAH), and 236–239 (TLSK). The residue at position 239 (Lys-239) is an N6-(pyridoxal phosphate)lysine. Substrate is bound at residue Thr-348.

It belongs to the class-II pyridoxal-phosphate-dependent aminotransferase family. BioF subfamily. As to quaternary structure, homodimer. The cofactor is pyridoxal 5'-phosphate.

The enzyme catalyses 6-carboxyhexanoyl-[ACP] + L-alanine + H(+) = (8S)-8-amino-7-oxononanoate + holo-[ACP] + CO2. It functions in the pathway cofactor biosynthesis; biotin biosynthesis. Functionally, catalyzes the decarboxylative condensation of pimeloyl-[acyl-carrier protein] and L-alanine to produce 8-amino-7-oxononanoate (AON), [acyl-carrier protein], and carbon dioxide. The chain is Putative 8-amino-7-oxononanoate synthase (bioF) from Caulobacter sp. (strain K31).